The chain runs to 123 residues: uncharacterized protein (123 aa).

Positions 17–117 (SNDNAFLVDV…NNQDKGWKQN (101 aa)) constitute a Rhodanese domain.

This is an uncharacterized protein from Rickettsia conorii (strain ATCC VR-613 / Malish 7).